Here is a 120-residue protein sequence, read N- to C-terminus: MSRAKVTNARRKQRVRLSLRRSAGGRPRLSVFRSSKHIYAQVIDDQKGETIASASSMEKEMRSAGNTGADIDAAKAVGKLLAERAVKAGIKEVVFDRGGYLYHGRVKALADAARESGLSF.

This sequence belongs to the universal ribosomal protein uL18 family. As to quaternary structure, part of the 50S ribosomal subunit; part of the 5S rRNA/L5/L18/L25 subcomplex. Contacts the 5S and 23S rRNAs.

This is one of the proteins that bind and probably mediate the attachment of the 5S RNA into the large ribosomal subunit, where it forms part of the central protuberance. The chain is Large ribosomal subunit protein uL18 from Bradyrhizobium sp. (strain ORS 278).